We begin with the raw amino-acid sequence, 204 residues long: Serotype 3 fimbrial subunit (204 aa).

An N-terminal signal peptide occupies residues methionine 1 to alanine 25. Cysteines 41 and 84 form a disulfide.

The protein belongs to the fimbrial protein family.

It is found in the fimbrium. Bordetella pertussis is the causative agent of whooping cough. An essential step in the disease process is the attachment of the bacteria to the ciliated epithelium of the respiratory tract, enabling the organism to resist normal host-clearance mechanisms. It is unclear which bacterial cell surface component are responsible for adherence but the fimbriae of B.pertussis are prime candidates for being involved in this process. The protein is Serotype 3 fimbrial subunit (fim3) of Bordetella pertussis (strain Tohama I / ATCC BAA-589 / NCTC 13251).